Here is a 54-residue protein sequence, read N- to C-terminus: Large ribosomal subunit protein bL33A (54 aa).

The protein belongs to the bacterial ribosomal protein bL33 family.

The chain is Large ribosomal subunit protein bL33A from Streptomyces griseus subsp. griseus (strain JCM 4626 / CBS 651.72 / NBRC 13350 / KCC S-0626 / ISP 5235).